Here is a 242-residue protein sequence, read N- to C-terminus: Probable transcriptional regulatory protein MHP7448_0474 (242 aa).

Belongs to the TACO1 family.

The protein resides in the cytoplasm. This chain is Probable transcriptional regulatory protein MHP7448_0474, found in Mesomycoplasma hyopneumoniae (strain 7448) (Mycoplasma hyopneumoniae).